Reading from the N-terminus, the 245-residue chain is DNA polymerase sliding clamp (245 aa).

The protein belongs to the PCNA family. As to quaternary structure, homotrimer. The subunits circularize to form a toroid; DNA passes through its center. Replication factor C (RFC) is required to load the toroid on the DNA.

Its function is as follows. Sliding clamp subunit that acts as a moving platform for DNA processing. Responsible for tethering the catalytic subunit of DNA polymerase and other proteins to DNA during high-speed replication. The sequence is that of DNA polymerase sliding clamp from Methanosarcina barkeri (strain Fusaro / DSM 804).